We begin with the raw amino-acid sequence, 389 residues long: ATP phosphoribosyltransferase regulatory subunit (389 aa).

This sequence belongs to the class-II aminoacyl-tRNA synthetase family. HisZ subfamily. As to quaternary structure, heteromultimer composed of HisG and HisZ subunits.

The protein resides in the cytoplasm. It participates in amino-acid biosynthesis; L-histidine biosynthesis; L-histidine from 5-phospho-alpha-D-ribose 1-diphosphate: step 1/9. In terms of biological role, required for the first step of histidine biosynthesis. May allow the feedback regulation of ATP phosphoribosyltransferase activity by histidine. The sequence is that of ATP phosphoribosyltransferase regulatory subunit from Hydrogenovibrio crunogenus (strain DSM 25203 / XCL-2) (Thiomicrospira crunogena).